The sequence spans 430 residues: Asparagine--tRNA ligase (430 aa).

This sequence belongs to the class-II aminoacyl-tRNA synthetase family. As to quaternary structure, homodimer.

It localises to the cytoplasm. The enzyme catalyses tRNA(Asn) + L-asparagine + ATP = L-asparaginyl-tRNA(Asn) + AMP + diphosphate + H(+). The protein is Asparagine--tRNA ligase of Staphylococcus epidermidis (strain ATCC 35984 / DSM 28319 / BCRC 17069 / CCUG 31568 / BM 3577 / RP62A).